The chain runs to 75 residues: UPF0729 protein C18orf32 homolog (75 aa).

A necessary for its localzation to the endoplasmic reticulum and lipid droplets region spans residues Met-1–Arg-37. A compositionally biased stretch (polar residues) spans Asp-43–Gly-65. Residues Asp-43 to Asp-75 form a disordered region.

This sequence belongs to the UPF0729 family.

The protein localises to the endoplasmic reticulum. The protein resides in the lipid droplet. In Danio rerio (Zebrafish), this protein is UPF0729 protein C18orf32 homolog.